The chain runs to 141 residues: Putative RING-H2 finger protein ATL62 (141 aa).

The chain crosses the membrane as a helical span at residues 14–32 (FFAILTVFYSIFRCCLAYC). An RING-type; degenerate zinc finger spans residues 79-121 (CVVCLSKFIDEDKARVLPSCNHCFHFDFTDTWLHSDYTCPNCR).

The protein belongs to the RING-type zinc finger family. ATL subfamily.

Its subcellular location is the membrane. The enzyme catalyses S-ubiquitinyl-[E2 ubiquitin-conjugating enzyme]-L-cysteine + [acceptor protein]-L-lysine = [E2 ubiquitin-conjugating enzyme]-L-cysteine + N(6)-ubiquitinyl-[acceptor protein]-L-lysine.. It functions in the pathway protein modification; protein ubiquitination. The sequence is that of Putative RING-H2 finger protein ATL62 (ATL62) from Arabidopsis thaliana (Mouse-ear cress).